Here is a 415-residue protein sequence, read N- to C-terminus: Serine hydroxymethyltransferase (415 aa).

Residues L120 and 124–126 (GHL) contribute to the (6S)-5,6,7,8-tetrahydrofolate site. Residue K229 is modified to N6-(pyridoxal phosphate)lysine.

The protein belongs to the SHMT family. Homodimer. Requires pyridoxal 5'-phosphate as cofactor.

The protein resides in the cytoplasm. It catalyses the reaction (6R)-5,10-methylene-5,6,7,8-tetrahydrofolate + glycine + H2O = (6S)-5,6,7,8-tetrahydrofolate + L-serine. Its pathway is one-carbon metabolism; tetrahydrofolate interconversion. It participates in amino-acid biosynthesis; glycine biosynthesis; glycine from L-serine: step 1/1. In terms of biological role, catalyzes the reversible interconversion of serine and glycine with tetrahydrofolate (THF) serving as the one-carbon carrier. This reaction serves as the major source of one-carbon groups required for the biosynthesis of purines, thymidylate, methionine, and other important biomolecules. Also exhibits THF-independent aldolase activity toward beta-hydroxyamino acids, producing glycine and aldehydes, via a retro-aldol mechanism. The chain is Serine hydroxymethyltransferase from Caldicellulosiruptor bescii (strain ATCC BAA-1888 / DSM 6725 / KCTC 15123 / Z-1320) (Anaerocellum thermophilum).